The chain runs to 64 residues: Large ribosomal subunit protein bL35 (64 aa).

Residues 1 to 17 (MKQKTHSGIKKRIKKTG) are compositionally biased toward basic residues. Positions 1–64 (MKQKTHSGIK…KRVNRLLGEG (64 aa)) are disordered. Residues 21–33 (LRREQANRRHLLE) are compositionally biased toward basic and acidic residues.

Belongs to the bacterial ribosomal protein bL35 family.

This is Large ribosomal subunit protein bL35 from Corynebacterium kroppenstedtii (strain DSM 44385 / JCM 11950 / CIP 105744 / CCUG 35717).